The following is a 517-amino-acid chain: Crotonobetaine/carnitine--CoA ligase (517 aa).

This sequence belongs to the ATP-dependent AMP-binding enzyme family.

The catalysed reaction is 4-(trimethylamino)butanoate + ATP + CoA = 4-(trimethylamino)butanoyl-CoA + AMP + diphosphate. The enzyme catalyses crotonobetaine + ATP + CoA = crotonobetainyl-CoA + AMP + diphosphate. It carries out the reaction (R)-carnitine + ATP + CoA = (R)-carnitinyl-CoA + AMP + diphosphate. Its pathway is amine and polyamine metabolism; carnitine metabolism. Catalyzes the transfer of CoA to carnitine, generating the initial carnitinyl-CoA needed for the CaiB reaction cycle. Also has activity toward crotonobetaine and gamma-butyrobetaine. The chain is Crotonobetaine/carnitine--CoA ligase from Salmonella heidelberg (strain SL476).